Consider the following 241-residue polypeptide: tRNA (guanine-N(7)-)-methyltransferase (241 aa).

The span at 1–10 (MTESNETPNT) shows a compositional bias: polar residues. The segment at 1-21 (MTESNETPNTPEAGDESKHRR) is disordered. S-adenosyl-L-methionine contacts are provided by E71, E96, D123, and D146. Residue D146 is part of the active site. Residues K150, D182, and 219 to 222 (TKFE) each bind substrate.

This sequence belongs to the class I-like SAM-binding methyltransferase superfamily. TrmB family.

The enzyme catalyses guanosine(46) in tRNA + S-adenosyl-L-methionine = N(7)-methylguanosine(46) in tRNA + S-adenosyl-L-homocysteine. The protein operates within tRNA modification; N(7)-methylguanine-tRNA biosynthesis. In terms of biological role, catalyzes the formation of N(7)-methylguanine at position 46 (m7G46) in tRNA. This chain is tRNA (guanine-N(7)-)-methyltransferase, found in Pseudomonas fluorescens (strain SBW25).